Consider the following 282-residue polypeptide: Acyl-CoA-binding domain-containing protein 6 (282 aa).

The disordered stretch occupies residues 1 to 31 (MASSFLPAGAITGDSGGELSSGDDSGEVEFP). One can recognise an ACB domain in the interval 42 to 127 (LAELFEKAAA…VKKLDPGWNP (86 aa)). An acyl-CoA-binding positions include 69-73 (YARYK) and Lys95. Ser106 is modified (phosphoserine). Tyr114 contacts an acyl-CoA. ANK repeat units lie at residues 191–220 (EGRA…DINC) and 224–253 (EGQT…DPTL).

Monomer. In terms of tissue distribution, detected in placenta and spleen (at protein level). Detected in placenta, umbilical cord blood, CD34-positive hematopoietic progenitor cells and bone marrow.

Its subcellular location is the cytoplasm. It localises to the nucleus. Its function is as follows. Binds long-chain acyl-coenzyme A molecules with a strong preference for unsaturated C18:1-CoA, lower affinity for unsaturated C20:4-CoA, and very weak affinity for saturated C16:0-CoA. Does not bind fatty acids. Plays a role in protein N-myristoylation. This Homo sapiens (Human) protein is Acyl-CoA-binding domain-containing protein 6 (ACBD6).